Here is a 244-residue protein sequence, read N- to C-terminus: MENFTALFGAQTDPPPPPSALGFGPGKPPPPPPPPPGGGPGAAPPSTATSAPAGADKSTAGSGPFYLMRELPGSTELTGSTNLITHYNLEQAYNKFCGKKVKEKLSNFLPDLPGMIDLPGSHDNSSLRSLIEKPPILGGSFNPITGTMLSGFRLHTGPLPEQCRLMHIQPPKKKNKHKHKQSRTQDPVPPETPSDSDHKKKKKKKEEDPERKRKKKEKKKKKNRHSPDHPGMGSSQASSSSSLR.

2 disordered regions span residues 1-67 (MENF…PFYL) and 171-244 (PKKK…SSLR). Residues 26 to 38 (GKPPPPPPPPPGG) show a composition bias toward pro residues. Low complexity predominate over residues 44 to 55 (PPSTATSAPAGA). Residues 171–182 (PKKKNKHKHKQS) are compositionally biased toward basic residues. A Phosphoserine modification is found at Ser-194. Positions 212-224 (KRKKKEKKKKKNR) are enriched in basic residues. Residue Ser-226 is modified to Phosphoserine. Residues 234-244 (SSQASSSSSLR) show a composition bias toward low complexity.

Belongs to the Mediator complex subunit 19 family. In terms of assembly, component of the Mediator complex, which is composed of MED1, MED4, MED6, MED7, MED8, MED9, MED10, MED11, MED12, MED13, MED13L, MED14, MED15, MED16, MED17, MED18, MED19, MED20, MED21, MED22, MED23, MED24, MED25, MED26, MED27, MED29, MED30, MED31, CCNC, CDK8 and CDC2L6/CDK11. The MED12, MED13, CCNC and CDK8 subunits form a distinct module termed the CDK8 module. Mediator containing the CDK8 module is less active than Mediator lacking this module in supporting transcriptional activation. Individual preparations of the Mediator complex lacking one or more distinct subunits have been variously termed ARC, CRSP, DRIP, PC2, SMCC and TRAP.

The protein resides in the nucleus. Component of the Mediator complex, a coactivator involved in the regulated transcription of nearly all RNA polymerase II-dependent genes. Mediator functions as a bridge to convey information from gene-specific regulatory proteins to the basal RNA polymerase II transcription machinery. Mediator is recruited to promoters by direct interactions with regulatory proteins and serves as a scaffold for the assembly of a functional preinitiation complex with RNA polymerase II and the general transcription factors. This chain is Mediator of RNA polymerase II transcription subunit 19 (Med19), found in Mus musculus (Mouse).